The primary structure comprises 235 residues: Protein GrpE (235 aa).

The segment covering 1–18 has biased composition (polar residues); the sequence is MTDGNQKPDGNSGEQVTV. 2 disordered regions span residues 1 to 50 and 198 to 235; these read MTDG…DAAH and ESVD…PSGS. The span at 19–35 shows a compositional bias: basic and acidic residues; sequence TDKRRIDPETGEVRHVP. Positions 215–235 are enriched in polar residues; that stretch reads ADQGNSADTSGEQAESEPSGS.

It belongs to the GrpE family. Homodimer.

The protein resides in the cytoplasm. In terms of biological role, participates actively in the response to hyperosmotic and heat shock by preventing the aggregation of stress-denatured proteins, in association with DnaK and GrpE. It is the nucleotide exchange factor for DnaK and may function as a thermosensor. Unfolded proteins bind initially to DnaJ; upon interaction with the DnaJ-bound protein, DnaK hydrolyzes its bound ATP, resulting in the formation of a stable complex. GrpE releases ADP from DnaK; ATP binding to DnaK triggers the release of the substrate protein, thus completing the reaction cycle. Several rounds of ATP-dependent interactions between DnaJ, DnaK and GrpE are required for fully efficient folding. This is Protein GrpE from Mycobacterium tuberculosis (strain ATCC 25177 / H37Ra).